The chain runs to 281 residues: Ribosomal RNA small subunit methyltransferase A (281 aa).

Residues N36, L38, G63, E84, D109, and N127 each contribute to the S-adenosyl-L-methionine site.

The protein belongs to the class I-like SAM-binding methyltransferase superfamily. rRNA adenine N(6)-methyltransferase family. RsmA subfamily.

It localises to the cytoplasm. It carries out the reaction adenosine(1518)/adenosine(1519) in 16S rRNA + 4 S-adenosyl-L-methionine = N(6)-dimethyladenosine(1518)/N(6)-dimethyladenosine(1519) in 16S rRNA + 4 S-adenosyl-L-homocysteine + 4 H(+). Specifically dimethylates two adjacent adenosines (A1518 and A1519) in the loop of a conserved hairpin near the 3'-end of 16S rRNA in the 30S particle. May play a critical role in biogenesis of 30S subunits. This is Ribosomal RNA small subunit methyltransferase A from Borreliella afzelii (strain PKo) (Borrelia afzelii).